The following is a 624-amino-acid chain: Chaperone protein HtpG (624 aa).

Positions 1-336 (MKGQETRGFQ…SSDLPLNVSR (336 aa)) are a; substrate-binding. The tract at residues 337–552 (EILQDSTVTR…ADEMSTQMAK (216 aa)) is b. Positions 553-624 (LFAAAGQKVP…IRRMNQLLVS (72 aa)) are c.

Belongs to the heat shock protein 90 family. Homodimer.

Its subcellular location is the cytoplasm. Molecular chaperone. Has ATPase activity. The polypeptide is Chaperone protein HtpG (Escherichia coli O139:H28 (strain E24377A / ETEC)).